The primary structure comprises 255 residues: Glutamate racemase (255 aa).

Substrate contacts are provided by residues 7–8 and 39–40; these read DS and YG. Catalysis depends on Cys70, which acts as the Proton donor/acceptor. 71 to 72 provides a ligand contact to substrate; it reads NT. Cys181 serves as the catalytic Proton donor/acceptor. 182 to 183 is a substrate binding site; the sequence is TH.

The protein belongs to the aspartate/glutamate racemases family.

It carries out the reaction L-glutamate = D-glutamate. The protein operates within cell wall biogenesis; peptidoglycan biosynthesis. Provides the (R)-glutamate required for cell wall biosynthesis. This chain is Glutamate racemase, found in Helicobacter pylori (strain HPAG1).